A 249-amino-acid polypeptide reads, in one-letter code: Flavin-dependent thymidylate synthase (249 aa).

One can recognise a ThyX domain in the interval 8–225; it reads VKVKLLEYTP…PNLFKYSGPS (218 aa). FAD contacts are provided by residues Ser-62, 86–88, and Gln-94; that span reads RHR. Residues 83–86, 94–98, and Arg-164 contribute to the dUMP site; these read QLVR and QQSQR. A ThyX motif motif is present at residues 86–96; the sequence is RHRIASYSQQS. FAD-binding positions include 180 to 182 and Asn-186; that span reads NAR. Arg-191 provides a ligand contact to dUMP. Arg-191 serves as the catalytic Involved in ionization of N3 of dUMP, leading to its activation.

This sequence belongs to the thymidylate synthase ThyX family. Homotetramer. Requires FAD as cofactor.

It carries out the reaction dUMP + (6R)-5,10-methylene-5,6,7,8-tetrahydrofolate + NADPH + H(+) = dTMP + (6S)-5,6,7,8-tetrahydrofolate + NADP(+). The protein operates within pyrimidine metabolism; dTTP biosynthesis. In terms of biological role, catalyzes the reductive methylation of 2'-deoxyuridine-5'-monophosphate (dUMP) to 2'-deoxythymidine-5'-monophosphate (dTMP) while utilizing 5,10-methylenetetrahydrofolate (mTHF) as the methyl donor, and NADPH and FADH(2) as the reductant. In Clostridium tetani (strain Massachusetts / E88), this protein is Flavin-dependent thymidylate synthase.